Consider the following 118-residue polypeptide: Large ribosomal subunit protein bL17 (118 aa).

The protein belongs to the bacterial ribosomal protein bL17 family. Part of the 50S ribosomal subunit. Contacts protein L32.

This Phytoplasma australiense protein is Large ribosomal subunit protein bL17.